Reading from the N-terminus, the 249-residue chain is Aquaporin SIP2-1 (249 aa).

The next 2 membrane-spanning stretches (helical) occupy residues 12–32 (PWLV…GALV) and 53–73 (VSLS…SGGA). The NPA 1 signature appears at 76 to 78 (NPL). 4 consecutive transmembrane segments (helical) span residues 104–124 (AQVI…PNVG), 133–155 (AHHG…VTLK), 176–196 (IHLL…AFAW), and 210–230 (LVYW…VTFF). The NPA 2 signature appears at 189 to 191 (NPA).

The protein belongs to the MIP/aquaporin (TC 1.A.8) family. SIP (TC 1.A.8.10) subfamily.

Its subcellular location is the membrane. Aquaporins facilitate the transport of water and small neutral solutes across cell membranes. This is Aquaporin SIP2-1 (SIP2-1) from Zea mays (Maize).